We begin with the raw amino-acid sequence, 310 residues long: Carbamate kinase-like protein YqeA (310 aa).

The protein belongs to the carbamate kinase family.

The protein is Carbamate kinase-like protein YqeA (yqeA) of Escherichia coli (strain K12).